The primary structure comprises 479 residues: Proline--tRNA ligase (479 aa).

The protein belongs to the class-II aminoacyl-tRNA synthetase family. ProS type 3 subfamily. Homodimer.

It is found in the cytoplasm. It carries out the reaction tRNA(Pro) + L-proline + ATP = L-prolyl-tRNA(Pro) + AMP + diphosphate. In terms of biological role, catalyzes the attachment of proline to tRNA(Pro) in a two-step reaction: proline is first activated by ATP to form Pro-AMP and then transferred to the acceptor end of tRNA(Pro). The sequence is that of Proline--tRNA ligase from Agathobacter rectalis (strain ATCC 33656 / DSM 3377 / JCM 17463 / KCTC 5835 / VPI 0990) (Eubacterium rectale).